Consider the following 81-residue polypeptide: Protein GPR15LG (81 aa).

The first 24 residues, 1–24 (MRFLALTSLLCILLLCLSFFSAEG), serve as a signal peptide directing secretion. 2 disulfide bridges follow: Cys40–Cys63 and Cys41–Cys60.

In terms of assembly, interacts with SUSD2; the interaction is direct.

The protein localises to the secreted. Its function is as follows. Highly cationic protein that has multiple functions. Acts as a chemotactic factor that mediates lymphocytes recruitment to epithelia through binding and activation of the G-protein coupled receptor GPR15. May be a tumor suppressor; together with SUSD2 has a growth inhibitory effect on colon cancer cells which includes G1 cell cycle arrest. May regulate keratinocyte proliferation. In addition, through activation of Mas-related G protein-coupled receptors (MRGPRs) contributes to pruritogenesis by activating itch-selective sensory neurons and mast cells degranulation. Functionally, has antimicrobial activity against Gram-positive bacteria, including Staphylococcus aureus and Actinomyces spec., and Mycoplasma hominis and lentivirus. The chain is Protein GPR15LG (GPR15LG) from Sus scrofa (Pig).